Reading from the N-terminus, the 453-residue chain is tRNA modification GTPase MnmE (453 aa).

(6S)-5-formyl-5,6,7,8-tetrahydrofolate contacts are provided by Arg-22, Glu-79, and Lys-119. Residues Gly-215–Gly-376 form the TrmE-type G domain. Residue Asn-225 coordinates K(+). Residues Asn-225–Ser-230, Thr-244–Thr-250, Asp-269–Gly-272, and Asn-334–Asp-337 contribute to the GTP site. Ser-229 is a Mg(2+) binding site. Thr-244, Ile-246, and Thr-249 together coordinate K(+). Mg(2+) is bound at residue Thr-250. Lys-453 is a (6S)-5-formyl-5,6,7,8-tetrahydrofolate binding site.

The protein belongs to the TRAFAC class TrmE-Era-EngA-EngB-Septin-like GTPase superfamily. TrmE GTPase family. In terms of assembly, homodimer. Heterotetramer of two MnmE and two MnmG subunits. Requires K(+) as cofactor.

Its subcellular location is the cytoplasm. Functionally, exhibits a very high intrinsic GTPase hydrolysis rate. Involved in the addition of a carboxymethylaminomethyl (cmnm) group at the wobble position (U34) of certain tRNAs, forming tRNA-cmnm(5)s(2)U34. The polypeptide is tRNA modification GTPase MnmE (Shewanella denitrificans (strain OS217 / ATCC BAA-1090 / DSM 15013)).